Reading from the N-terminus, the 337-residue chain is Ribonucleoside-diphosphate reductase small subunit (337 aa).

The segment at 1–22 (MDPAVSPASTDPLDTHASGAGA) is disordered. Positions 91, 121, and 124 each coordinate Fe cation. Tyrosine 128 is an active-site residue. Residues 177–197 (FILMILIEGVFFAASFAAIAY) traverse the membrane as a helical segment. Fe cation contacts are provided by glutamate 184, glutamate 218, and histidine 221.

The protein belongs to the ribonucleoside diphosphate reductase small chain family. As to quaternary structure, heterotetramer composed of a homodimer of the large subunit (R1) and a homodimer of the small subunit (R2). Larger multisubunit protein complex are also active, composed of (R1)n(R2)n. Fe cation serves as cofactor.

The protein localises to the host membrane. It carries out the reaction a 2'-deoxyribonucleoside 5'-diphosphate + [thioredoxin]-disulfide + H2O = a ribonucleoside 5'-diphosphate + [thioredoxin]-dithiol. Functionally, ribonucleoside-diphosphate reductase holoenzyme provides the precursors necessary for viral DNA synthesis. Allows virus growth in non-dividing cells, as well as reactivation from latency in infected hosts. Catalyzes the biosynthesis of deoxyribonucleotides from the corresponding ribonucleotides. In Human herpesvirus 2 (strain 333) (HHV-2), this protein is Ribonucleoside-diphosphate reductase small subunit.